The following is a 61-amino-acid chain: Probable tautomerase lmo2564 (61 aa).

The active-site Proton acceptor; via imino nitrogen is the proline 2.

It belongs to the 4-oxalocrotonate tautomerase family.

In Listeria monocytogenes serovar 1/2a (strain ATCC BAA-679 / EGD-e), this protein is Probable tautomerase lmo2564.